Here is a 177-residue protein sequence, read N- to C-terminus: KxDL motif-containing protein 1 (177 aa).

An N-acetylmethionine modification is found at methionine 1. The disordered stretch occupies residues 100 to 177 (SHIPEGSFLE…TDDEEETHEE (78 aa)). Positions 125–145 (ATSEQSTGSCDTSPDTVSPSL) are enriched in polar residues.

Belongs to the KXD1 family. Component of the BLOC-one-related complex (BORC) which is composed of BLOC1S1, BLOC1S2, BORCS5, BORCS6, BORCS7, BORCS8, KXD1 and SNAPIN. Associates with the BLOC-1 complex. Interacts with BLOC1S1. Interacts with DTNBP1/BLOC1S7 (via coiled-coil domain). Widely expressed.

The protein localises to the lysosome membrane. As part of the BORC complex may play a role in lysosomes movement and localization at the cell periphery. Associated with the cytosolic face of lysosomes, the BORC complex may recruit ARL8B and couple lysosomes to microtubule plus-end-directed kinesin motor. May also be involved in the biogenesis of lysosome-related organelles such as melanosomes. The sequence is that of KxDL motif-containing protein 1 (Kxd1) from Mus musculus (Mouse).